The primary structure comprises 493 residues: MAAAAEGDEDPRWRRCNTDCVYFLASPFTCTKGSKCEYRHADGARFNRRNCWYWFKGNCVNPSCTFRHPPLENLNKTKSLADPLSLCSTSVKAANPCYFYYNSHCSKGDNCPYLHEPLTSNDAVGTSCKATTSNPAVSKSYVGDEMVEESKDTITNPCQDTSCHIKEVPVSINPEFGEAEAVSGALETSTDIDEYMKCSAVSDLNSGDSTMDHTEQDERDSSPGFDVLVDDCLSNKSDLEHQLTTESDNKVLHAEYGIRDPVLYDMYYHDPEYYNYEPEFCGLDDRQGYLYLCQPNGAHEHESEITLGHLLPQNTEVTSDEYDRRFFNPRNFTSSVADTNFVHQHTQIRHISKRRPENRKGAKGKKDCIKRSRCLEPKNSTQQIESMPTRQRKDYLMGECPQPANHATFRGRRKKNRGKQQHVLSAKSSEHPTADFTGPKTLAQIKEEKCKSNSSFSHSTACTPNVRSFSDDFEGPKSLTELLMTKSRSSVGK.

3 consecutive C3H1-type zinc fingers follow at residues 14–43, 45–71, and 91–118; these read RRCN…HADG, RFNR…HPPL, and VKAA…HEPL. Residues 397 to 477 form a disordered region; the sequence is MGECPQPANH…SFSDDFEGPK (81 aa). Basic residues predominate over residues 409 to 420; sequence FRGRRKKNRGKQ. Positions 452 to 468 are enriched in polar residues; it reads SNSSFSHSTACTPNVRS.

The chain is Zinc finger CCCH domain-containing protein 34 from Oryza sativa subsp. japonica (Rice).